The chain runs to 462 residues: Iroquois-class homeodomain protein irx-1-B (462 aa).

The segment at residues 121–183 (DPGRPKNATR…NARRRLKKEN (63 aa)) is a DNA-binding region (homeobox; TALE-type). Disordered stretches follow at residues 191-302 (GKED…PHSK), 314-339 (SPDG…QHPA), and 405-462 (SLSS…LPSA). Acidic residues-rich tracts occupy residues 210-220 (EDDEEIDLESI) and 228-239 (NDGEQSNEEEDE). Residues 240 to 257 (KLDHFRHGEKVSLKKESE) show a composition bias toward basic and acidic residues. Basic and acidic residues predominate over residues 410–426 (RTPERTSPKHSDRENLP). The segment covering 446–455 (FSQQEGTSRI) has biased composition (polar residues).

It belongs to the TALE/IRO homeobox family.

The protein localises to the nucleus. Its function is as follows. Acts partially redundantly with other irx members in neural patterning. Required for formation of the posterior forebrain, midbrain, hindbrain, and to a lesser extent, spinal cord. Acts early in neural plate development to induce expression of some but not all proneural genes, and specify a neural precursor state. Also up-regulates repressors that prevent neuronal differentiation. Patterns the neuroectoderm in both the anterior/posterior and dorsal/ventral axes. Acts primarily as a transcriptional repressor during neural development, and binds to the bmp4 promoter to repress gene expression and thus mediate down-regulation of bmp4 by wnt signaling. Controls multiple processes through bmp4-repression including neural plate development, neural crest specification and Spemann organizer development. Involved in the specification of the preplacodal field at the anterior border of the neural plate. Regulates the genetic cascade of interactions that are necessary for positioning the isthmus organizer and the formation of the midbrain-hindbrain boundary. Required during at least two stages of pronephros kidney development; during neurula stages, maintains transcription of key renal genes to define the size and identity of the pronephric anlage, probably in part through regulation of bmp-signaling. Subsequently required for proper formation of the intermediate tubule segment of the pronephros. Acts principally as a transcriptional activator during pronephros development. The polypeptide is Iroquois-class homeodomain protein irx-1-B (irx1-b) (Xenopus laevis (African clawed frog)).